Here is a 99-residue protein sequence, read N- to C-terminus: Keratinocyte differentiation-associated protein (99 aa).

An N-terminal signal peptide occupies residues 1 to 22; sequence MKIPVLPAVVLLSLLVLHSAQG.

In terms of tissue distribution, highly expressed in skin and detected at lower levels in thymus. In skin, found exclusively in lamellar granules of granular keratinocytes and in the intracellular space of the stratum corneum. Also highly expressed in oral mucosa, tongue, esophagus, and stomach, and at much lower levels in bladder and uterus. Not detected in gastrointestinal mucosa.

The protein localises to the secreted. In terms of biological role, may act as a soluble regulator of keratinocyte differentiation. May play an important role in embryonic skin morphogenesis. This chain is Keratinocyte differentiation-associated protein (KRTDAP), found in Homo sapiens (Human).